The following is a 543-amino-acid chain: MTNRRYESVQSYLFNNRNNKIDAHQFFERVDTAEAQIIKNNIYDNTVVLNRDVLLNILKLANDVFDNKAYMYVDDSEVSRHYNAVVKMKRLVIGVRDPSLRQSLYNTIAYIERLLNIGTVNDSEITMLIADFYDLYSNYNIELPPPQALPRSRRPSVVQPAAPAPVPTIVREQTKPEQIIPAAPPPPPSPVPNIPAPPPPPPPSMSELPPAPPMPTEPQPAAPLDDRQQLLEAIRNEKNRTRLRPVKPKTAPETSTIVEVPTVLPKETFEPKPPSASPPPPPPPPPPPAPPAPPPMVDLSSAPPPPPLVDLPSEMLPPPAPSLSNVLSELKSGTVRLKPAQKRPQSEIIPKSSTTNLIADVLADTINRRRVAMAKSSSEATSNDEGWDDDDNRPNKANTPDVKYVQALFNVFTSSQLYTNDSDERNTKAHNILNDVEPLLQNKTQTNIDKARLLLQDLASFVALSENPLDSPAIGSEKQPLFETNRNLFYKSIEDLIFKFRYKDAENHLIFALTYHPKDYKFNELLKYVQQLSVNQQRTESSA.

3 disordered regions span residues 147–222, 235–325, and 373–400; these read QALP…QPAA, RNEK…SLSN, and MAKS…ANTP. Positions 182–221 are enriched in pro residues; it reads AAPPPPPSPVPNIPAPPPPPPPSMSELPPAPPMPTEPQPA. In terms of domain architecture, WH2 spans 226-246; the sequence is DRQQLLEAIRNEKNRTRLRPV. The span at 271-321 shows a compositional bias: pro residues; sequence PKPPSASPPPPPPPPPPPAPPAPPPMVDLSSAPPPPPLVDLPSEMLPPPAP. Residues 375–384 are compositionally biased toward polar residues; sequence KSSSEATSND.

In terms of assembly, forms a complex with proteins C42 and E27. Interacts with host actin-related protein 2/3 complex. Interacts with protein Ac102.

It is found in the host cytoplasm. Its subcellular location is the host nucleus. Functionally, plays a role in the transport of the nucleocapsids from the cytoplasm toward the host nucleus together with the host actin-polymerizing Arp2/3 complex. The protein is Protein P78/83 (P61) of Lepidoptera (butterflies and moths).